The primary structure comprises 352 residues: CD5 antigen-like (352 aa).

Residues Met-1–Ser-21 form the signal peptide. 3 SRCR domains span residues Val-27 to Glu-128, Val-141 to Glu-241, and Leu-246 to Thr-348. Cystine bridges form between Cys-36–Cys-70, Cys-52–Cys-117, Cys-65–Cys-127, Cys-98–Cys-108, Cys-166–Cys-230, Cys-179–Cys-240, Cys-211–Cys-221, Cys-255–Cys-289, Cys-271–Cys-337, Cys-284–Cys-347, and Cys-317–Cys-327. Residue Asn-99 is glycosylated (N-linked (GlcNAc...) asparagine). N-linked (GlcNAc...) asparagine glycosylation is present at Asn-229.

In terms of assembly, interacts with FASN; the interaction is direct. Interacts (via SRCR2 and SRCR3) with pentameric IgM (via Fc region); disulfide-linked. N-glycosylated. N-glycan at Asn-99 possesses only alpha2,6-sialylated terminals, while Asn-229 possesses both alpha2,6-sialylated and non-sialylated terminals. N-glycosylation increases secretion. As to expression, specifically expressed in tissue macrophages. Expressed in thymus, liver, spleen and lymph nodes. Present in Th17 cells; mainly present in non-pathogenic Th17 cells.

It localises to the secreted. It is found in the cytoplasm. Its function is as follows. Secreted protein that acts as a key regulator of lipid synthesis: mainly expressed by macrophages in lymphoid and inflamed tissues and regulates mechanisms in inflammatory responses, such as infection or atherosclerosis. Able to inhibit lipid droplet size in adipocytes. Following incorporation into mature adipocytes via CD36-mediated endocytosis, associates with cytosolic FASN, inhibiting fatty acid synthase activity and leading to lipolysis, the degradation of triacylglycerols into glycerol and free fatty acids (FFA). CD5L-induced lipolysis occurs with progression of obesity: participates in obesity-associated inflammation following recruitment of inflammatory macrophages into adipose tissues, a cause of insulin resistance and obesity-related metabolic disease. Regulation of intracellular lipids mediated by CD5L has a direct effect on transcription regulation mediated by nuclear receptors ROR-gamma (RORC). Acts as a key regulator of metabolic switch in T-helper Th17 cells. Regulates the expression of pro-inflammatory genes in Th17 cells by altering the lipid content and limiting synthesis of cholesterol ligand of RORC, the master transcription factor of Th17-cell differentiation. CD5L is mainly present in non-pathogenic Th17 cells, where it decreases the content of polyunsaturated fatty acyls (PUFA), affecting two metabolic proteins MSMO1 and CYP51A1, which synthesize ligands of RORC, limiting RORC activity and expression of pro-inflammatory genes. Participates in obesity-associated autoimmunity via its association with IgM, interfering with the binding of IgM to Fcalpha/mu receptor and enhancing the development of long-lived plasma cells that produce high-affinity IgG autoantibodies. Also acts as an inhibitor of apoptosis in macrophages: promotes macrophage survival from the apoptotic effects of oxidized lipids in case of atherosclerosis. Involved in early response to microbial infection against various pathogens by acting as a pattern recognition receptor and by promoting autophagy. The polypeptide is CD5 antigen-like (Cd5l) (Mus musculus (Mouse)).